Reading from the N-terminus, the 634-residue chain is MLKVLISPLGVGDTNTDVYKRQYKTAEYKFEGDIDGIESPFVLSVLIEKLKVDKVIVVGTAKSMWEKLYEYYAKEVGEFDEEYWIEIGKKVGMSKYDNYALSEEDLKKIEKVIDKYLKKINPNAVGGSKCKIIKYGIDKDEIWENFDLFMSLINEVNDGDEIYLDITHSFRSIPLFMYVMLEFMRYFKNVKLKGIYYGMLDVIRELGHAPVVDLSPIFEISEWIRGMYEFTTYGNSYLISKLLENEDKEIAEKLQKISRYIDANYLKELREEVKTLKPLLNEKKDTGRFLKYFIPELHKFIDKLKYEDSDFEFQISMAKWNFDNKKYSSGYLCLTDSIFWKLCELYNLPSVYKNREVMKGIIYNPSLNKKYSAFGSIKDMHYKRLRNIRNKIAHADVSKKGDDFNPENDLEDVVNLLKNVNLPDFDKIIEDLLLDVKNNQNNKTLKLLKNILNIQIIRKIIKAYNFESNEIYWDFVSGYLLNKNNKCNNEKLREIIEIFHKNIEDAGELEEAFNFVKNTEDEELLDSLALQNAIMHYALFKLSNAYNIKNKEDKEAIKWVLLNQNLCSKHPILKEINNNYHKIFKNKDKPMSNEILEASKNIIRLLNSDLSEIKDSVPLNLIIIRYRSYKNNRR.

CRISPR (clustered regularly interspaced short palindromic repeat) is an adaptive immune system that provides protection against mobile genetic elements (viruses, transposable elements and conjugative plasmids). CRISPR clusters contain spacers, sequences complementary to antecedent mobile elements, and target invading nucleic acids. CRISPR clusters are transcribed and processed into CRISPR RNA (crRNA). The type III Csm effector complex binds crRNA and acts as a crRNA-guided RNase, DNase and cyclic oligoadenylate synthase; binding of target RNA cognate to the crRNA is required for all activities. The sequence is that of CRISPR-associated protein MJ1674 from Methanocaldococcus jannaschii (strain ATCC 43067 / DSM 2661 / JAL-1 / JCM 10045 / NBRC 100440) (Methanococcus jannaschii).